The sequence spans 158 residues: NAD(P)H-quinone oxidoreductase subunit J, chloroplastic (158 aa).

It belongs to the complex I 30 kDa subunit family. In terms of assembly, NDH is composed of at least 16 different subunits, 5 of which are encoded in the nucleus.

Its subcellular location is the plastid. It is found in the chloroplast thylakoid membrane. The enzyme catalyses a plastoquinone + NADH + (n+1) H(+)(in) = a plastoquinol + NAD(+) + n H(+)(out). It catalyses the reaction a plastoquinone + NADPH + (n+1) H(+)(in) = a plastoquinol + NADP(+) + n H(+)(out). Its function is as follows. NDH shuttles electrons from NAD(P)H:plastoquinone, via FMN and iron-sulfur (Fe-S) centers, to quinones in the photosynthetic chain and possibly in a chloroplast respiratory chain. The immediate electron acceptor for the enzyme in this species is believed to be plastoquinone. Couples the redox reaction to proton translocation, and thus conserves the redox energy in a proton gradient. The protein is NAD(P)H-quinone oxidoreductase subunit J, chloroplastic of Buxus microphylla (Littleleaf boxwood).